The primary structure comprises 256 residues: Large ribosomal subunit protein eL8y (256 aa).

A compositionally biased stretch (basic residues) spans 1–15 (MAPKKGVKVASKKKP). Positions 1–20 (MAPKKGVKVASKKKPEKVTN) are disordered.

This sequence belongs to the eukaryotic ribosomal protein eL8 family.

The protein is Large ribosomal subunit protein eL8y (RPL7AB) of Arabidopsis thaliana (Mouse-ear cress).